The following is a 303-amino-acid chain: Recombination-associated protein RdgC (303 aa).

It belongs to the RdgC family.

The protein localises to the cytoplasm. The protein resides in the nucleoid. May be involved in recombination. The polypeptide is Recombination-associated protein RdgC (Shewanella halifaxensis (strain HAW-EB4)).